The chain runs to 209 residues: MKKQKTTTQKPKLSYRINEQIRVPEVRIIFPDGTQQVMKTIDAKRLAEEKNFDLIEVQPNADPPVCKLDNLGKLIYKMDKRDKDLKKKQKTTTLKELRFHPNTDKHDFDFKTAHLEEFLRKGNRVRATIVFLGRSIIYKDRGLELAERLTERLSCVSNRDGDPKFEGKKLFVYFEPDKKKVDAFERIKAKTGVPQQPLAPLPPSEDIEE.

Belongs to the IF-3 family. In terms of assembly, monomer.

It is found in the cytoplasm. IF-3 binds to the 30S ribosomal subunit and shifts the equilibrium between 70S ribosomes and their 50S and 30S subunits in favor of the free subunits, thus enhancing the availability of 30S subunits on which protein synthesis initiation begins. The sequence is that of Translation initiation factor IF-3 from Chlorobium phaeobacteroides (strain DSM 266 / SMG 266 / 2430).